The primary structure comprises 79 residues: Cell division protein ZapB (79 aa).

A coiled-coil region spans residues 6-78 (FEKLEVKVQQ…LRALLGKMEE (73 aa)).

This sequence belongs to the ZapB family. Homodimer. The ends of the coiled-coil dimer bind to each other, forming polymers. Interacts with FtsZ.

It is found in the cytoplasm. Functionally, non-essential, abundant cell division factor that is required for proper Z-ring formation. It is recruited early to the divisome by direct interaction with FtsZ, stimulating Z-ring assembly and thereby promoting cell division earlier in the cell cycle. Its recruitment to the Z-ring requires functional FtsA or ZipA. This is Cell division protein ZapB from Yersinia enterocolitica serotype O:8 / biotype 1B (strain NCTC 13174 / 8081).